A 436-amino-acid polypeptide reads, in one-letter code: D-amino acid dehydrogenase (436 aa).

Residue 3–17 (ILILGSGVIGVTSAW) participates in FAD binding.

The protein belongs to the DadA oxidoreductase family. The cofactor is FAD.

It catalyses the reaction a D-alpha-amino acid + A + H2O = a 2-oxocarboxylate + AH2 + NH4(+). It participates in amino-acid degradation; D-alanine degradation; NH(3) and pyruvate from D-alanine: step 1/1. Functionally, oxidative deamination of D-amino acids. The protein is D-amino acid dehydrogenase of Photorhabdus laumondii subsp. laumondii (strain DSM 15139 / CIP 105565 / TT01) (Photorhabdus luminescens subsp. laumondii).